The sequence spans 150 residues: D-aminoacyl-tRNA deacylase (150 aa).

The Gly-cisPro motif, important for rejection of L-amino acids motif lies at 136-137 (GP).

Belongs to the DTD family. As to quaternary structure, homodimer.

The protein resides in the cytoplasm. The catalysed reaction is glycyl-tRNA(Ala) + H2O = tRNA(Ala) + glycine + H(+). The enzyme catalyses a D-aminoacyl-tRNA + H2O = a tRNA + a D-alpha-amino acid + H(+). In terms of biological role, an aminoacyl-tRNA editing enzyme that deacylates mischarged D-aminoacyl-tRNAs. Also deacylates mischarged glycyl-tRNA(Ala), protecting cells against glycine mischarging by AlaRS. Acts via tRNA-based rather than protein-based catalysis; rejects L-amino acids rather than detecting D-amino acids in the active site. By recycling D-aminoacyl-tRNA to D-amino acids and free tRNA molecules, this enzyme counteracts the toxicity associated with the formation of D-aminoacyl-tRNA entities in vivo and helps enforce protein L-homochirality. The chain is D-aminoacyl-tRNA deacylase from Staphylococcus haemolyticus (strain JCSC1435).